A 146-amino-acid chain; its full sequence is Hemoglobin subunit beta (146 aa).

The Globin domain maps to 2-146; sequence HWSAEEKQLI…VAHALARKYH (145 aa). 2 residues coordinate heme b: histidine 63 and histidine 92.

The protein belongs to the globin family. In terms of assembly, heterotetramer of two alpha chains and two beta chains. In terms of tissue distribution, red blood cells.

Its function is as follows. Involved in oxygen transport from the lung to the various peripheral tissues. The polypeptide is Hemoglobin subunit beta (HBB) (Streptopelia orientalis (Eastern turtle dove)).